We begin with the raw amino-acid sequence, 157 residues long: uncharacterized protein (157 aa).

A signal peptide spans methionine 1–alanine 26.

The protein resides in the secreted. This is an uncharacterized protein from Homo sapiens (Human).